Consider the following 399-residue polypeptide: Tyrosine--tRNA ligase (399 aa).

Residue tyrosine 36 coordinates L-tyrosine. The 'HIGH' region motif lies at 41–50 (PTAPSLHIGN). L-tyrosine-binding residues include tyrosine 166 and glutamine 170. The 'KMSKS' region motif lies at 226-230 (KMGKS). Lysine 229 provides a ligand contact to ATP. Residues 332–395 (TRLVDVIVDL…KKRFVTVQVI (64 aa)) enclose the S4 RNA-binding domain.

This sequence belongs to the class-I aminoacyl-tRNA synthetase family. TyrS type 1 subfamily. In terms of assembly, homodimer.

The protein resides in the cytoplasm. It catalyses the reaction tRNA(Tyr) + L-tyrosine + ATP = L-tyrosyl-tRNA(Tyr) + AMP + diphosphate + H(+). In terms of biological role, catalyzes the attachment of tyrosine to tRNA(Tyr) in a two-step reaction: tyrosine is first activated by ATP to form Tyr-AMP and then transferred to the acceptor end of tRNA(Tyr). The protein is Tyrosine--tRNA ligase of Mycoplasma pneumoniae (strain ATCC 29342 / M129 / Subtype 1) (Mycoplasmoides pneumoniae).